We begin with the raw amino-acid sequence, 170 residues long: Ribosome maturation factor RimM (170 aa).

Residues 97-170 enclose the PRC barrel domain; the sequence is KNEFYWTDLI…QIRVEWGSDW (74 aa).

The protein belongs to the RimM family. In terms of assembly, binds ribosomal protein uS19.

Its subcellular location is the cytoplasm. Its function is as follows. An accessory protein needed during the final step in the assembly of 30S ribosomal subunit, possibly for assembly of the head region. Essential for efficient processing of 16S rRNA. May be needed both before and after RbfA during the maturation of 16S rRNA. It has affinity for free ribosomal 30S subunits but not for 70S ribosomes. The protein is Ribosome maturation factor RimM of Dechloromonas aromatica (strain RCB).